The following is a 247-amino-acid chain: Mast cell protease 2 (247 aa).

The N-terminal stretch at 1–19 (MHLLALHLLLFLLGSRAKA) is a signal peptide. A propeptide spans 20-21 (GE) (activation peptide). The Peptidase S1 domain maps to 22-245 (IIGGTECKPH…YRPWINKILR (224 aa)). Cys-51 and Cys-67 form a disulfide bridge. His-66 (charge relay system) is an active-site residue. Asn-80 carries an N-linked (GlcNAc...) asparagine glycan. Asp-110 serves as the catalytic Charge relay system. 2 cysteine pairs are disulfide-bonded: Cys-144–Cys-209 and Cys-175–Cys-188. Ser-203 (charge relay system) is an active-site residue.

This sequence belongs to the peptidase S1 family. Granzyme subfamily.

The protein is Mast cell protease 2 of Meriones unguiculatus (Mongolian jird).